A 102-amino-acid polypeptide reads, in one-letter code: Large ribosomal subunit protein uL24 (102 aa).

It belongs to the universal ribosomal protein uL24 family. As to quaternary structure, part of the 50S ribosomal subunit.

In terms of biological role, one of two assembly initiator proteins, it binds directly to the 5'-end of the 23S rRNA, where it nucleates assembly of the 50S subunit. Its function is as follows. One of the proteins that surrounds the polypeptide exit tunnel on the outside of the subunit. The chain is Large ribosomal subunit protein uL24 from Cupriavidus metallidurans (strain ATCC 43123 / DSM 2839 / NBRC 102507 / CH34) (Ralstonia metallidurans).